The primary structure comprises 147 residues: UPF0735 ACT domain-containing protein Cthe_1377 (147 aa).

One can recognise an ACT domain in the interval 71-146; that stretch reads TLFFTVEDYA…GVKRQEILAR (76 aa).

It belongs to the UPF0735 family.

This Acetivibrio thermocellus (strain ATCC 27405 / DSM 1237 / JCM 9322 / NBRC 103400 / NCIMB 10682 / NRRL B-4536 / VPI 7372) (Clostridium thermocellum) protein is UPF0735 ACT domain-containing protein Cthe_1377.